Reading from the N-terminus, the 185-residue chain is MNSDLTSFDKIEQKIDGSRKISNYIIGGMLTIGGIGFLLASISSYTGRDLLPLGNPSALLFIPQGIIMGAYGVIANLLNFYLWYMVYINFGSGSNSFDKSSKSVEIKRKGLFKDIEVRLDFDEIKSVKLDISEGFNPRRRIALVIKGRKKPLPISGAGELKPLLQVEEEGARLAKFLNVNLEGLK.

Helical transmembrane passes span 24–44 (YIIG…SISS) and 58–78 (ALLF…ANLL).

The protein belongs to the Ycf4 family.

It is found in the cellular thylakoid membrane. Its function is as follows. Seems to be required for the assembly of the photosystem I complex. This is Photosystem I assembly protein Ycf4 from Prochlorococcus marinus (strain MIT 9215).